The following is a 495-amino-acid chain: Lysine--tRNA ligase (495 aa).

Mg(2+) contacts are provided by Glu406 and Glu413.

Belongs to the class-II aminoacyl-tRNA synthetase family. As to quaternary structure, homodimer. Requires Mg(2+) as cofactor.

Its subcellular location is the cytoplasm. It catalyses the reaction tRNA(Lys) + L-lysine + ATP = L-lysyl-tRNA(Lys) + AMP + diphosphate. This chain is Lysine--tRNA ligase, found in Staphylococcus aureus (strain MRSA252).